Here is a 358-residue protein sequence, read N- to C-terminus: Core-capsid bridging protein (358 aa).

The tract at residues 296–331 (PSITPTPGYRGTTFKPSRTRSTRRRRSVRRRSRRTA) is disordered. The span at 312-329 (SRTRSTRRRRSVRRRSRR) shows a compositional bias: basic residues.

Belongs to the adenoviridae core-capsid bridging protein family. As to quaternary structure, monomer. Homodimer. Exists in equilibrium between monomers and dimers in solution. Interacts with the histone-like nucleoprotein; this interactions bridge the virus core to the capsid. Interacts with core protein X; this interactions bridge the virus core to the capsid. Interacts with the endosome lysis protein VI; this interactions bridge the virus core to the capsid. Interacts with the peripentonal hexons. Interacts with host NPM1; this interaction might play a role in virus assembly.

It is found in the virion. The protein resides in the host nucleus. Its subcellular location is the host nucleolus. Associates loosely with the viral DNA to form an outer shell around the nucleoprotein-DNA complex and links it with the capsid by binding the endosome lysis protein. Dissociates from the viral genome during entry. Might be involved in nuclear capsid assembly of the viral particles through its association with NPM1/nucleophosmin. The protein is Core-capsid bridging protein of Human adenovirus F serotype 40 (HAdV-40).